A 295-amino-acid chain; its full sequence is MHAALSPLSQRFERIAVQPLTGVLGAEITGVDLREPLDDSTWNEILDAFHTYQVIYFPGQAITNEQHIAFSRRFGPVDPVPLLKSIEGYPEVQMIRREANESGRVIGDDWHTDSTFLDAPPAAVVMRAIDVPEHGGDTGFLSMYTAWETLSPTMQATIEGLNVVHSATRVFGSLYQAQNRRFSNTSVKVMDVDAGDRETVHPLVVTHPGSGRKGLYVNQVYCQRIEGMTDAESKPLLQFLYEHATRFDFTCRVRWKKDQVLVWDNLCTMHRAVPDYAGKFRYLTRTTVGGVRPAR.

Fe cation contacts are provided by His111 and Asp113. 2 residues coordinate 2-oxoglutarate: Thr138 and Trp255. His270 is a binding site for Fe cation. Arg281 contributes to the 2-oxoglutarate binding site.

Belongs to the TfdA dioxygenase family. Homotrimer. Fe cation is required as a cofactor. L-ascorbate serves as cofactor.

The enzyme catalyses (R)-2-(4-chloro-2-methylphenoxy)propanoate + 2-oxoglutarate + O2 = 2-methyl-4-chlorophenol + pyruvate + succinate + CO2. It carries out the reaction (R)-(2,4-dichlorophenoxy)propanoate + 2-oxoglutarate + O2 = 2,4-dichlorophenol + pyruvate + succinate + CO2. It participates in xenobiotic degradation; 2-(2,4-dichlorophenoxy)propanoate degradation. Inhibited by divalent cations, most significantly by copper and nickel, and by diethylpyrocarbonate (DEPC). Involved in the degradation of the phenoxypropionate herbicides. Catalyzes the enantiospecific cleavage of the ether bond in the herbicid R-dichlorprop ((R)-2-(2,4-dichlorophenoxy)propionate)(R-2,4-DP) and R-mecoprop ((R)-2-(4-chloro-2-methylphenoxy)propionate)(R-2,4-MCPP). It can also accept (RS)-2-(2,4,5-trichlorophenoxy)propionate, (RS)-2-(4-chlorophenoxy)propionate, (RS)-2-(m-chlorophenoxy)propionate, however it can only accept 2-oxoglutarate as oxygen acceptor. This chain is (R)-phenoxypropionate/alpha-ketoglutarate-dioxygenase, found in Delftia acidovorans (Pseudomonas acidovorans).